We begin with the raw amino-acid sequence, 142 residues long: Large ribosomal subunit protein uL13 (142 aa).

The protein belongs to the universal ribosomal protein uL13 family. As to quaternary structure, part of the 50S ribosomal subunit.

Functionally, this protein is one of the early assembly proteins of the 50S ribosomal subunit, although it is not seen to bind rRNA by itself. It is important during the early stages of 50S assembly. The polypeptide is Large ribosomal subunit protein uL13 (Polaromonas sp. (strain JS666 / ATCC BAA-500)).